The chain runs to 89 residues: Elongation factor 1-beta (89 aa).

Belongs to the EF-1-beta/EF-1-delta family.

In terms of biological role, promotes the exchange of GDP for GTP in EF-1-alpha/GDP, thus allowing the regeneration of EF-1-alpha/GTP that could then be used to form the ternary complex EF-1-alpha/GTP/AAtRNA. The protein is Elongation factor 1-beta (ef1b) of Methanocaldococcus jannaschii (strain ATCC 43067 / DSM 2661 / JAL-1 / JCM 10045 / NBRC 100440) (Methanococcus jannaschii).